The chain runs to 344 residues: N,N-dimethyltransferase OxyT (344 aa).

Residues aspartate 205 and glycine 231 to phenylalanine 233 contribute to the S-adenosyl-L-methionine site.

This sequence belongs to the class I-like SAM-binding methyltransferase superfamily. Cation-independent O-methyltransferase family.

It carries out the reaction 4-amino-4-dedimethylamino-anhydrotetracycline + S-adenosyl-L-methionine = 4-methylamino-4-dedimethylamino-anhydrotetracycline + S-adenosyl-L-homocysteine + H(+). It catalyses the reaction 4-methylamino-4-dedimethylamino-anhydrotetracycline + S-adenosyl-L-methionine = anhydrotetracycline + S-adenosyl-L-homocysteine + H(+). It functions in the pathway antibiotic biosynthesis; oxytetracycline biosynthesis. Functionally, involved in the biosynthesis of the tetracycline antibiotic, oxytetracycline. Catalyzes the dimethylation of 4-amino-4-de(dimethylamino)anhydrotetracycline (4-amino-ATC) to yield anhydrotetracycline (ATC). Also able to catalyze the dimethylation of 7-chloro-, 6-demethyl-, 2-decarboxamido-2-nitrile-, and 4-methylamino-derivatives of 4-amino-4-de(dimethylamino)anhydrotetracycline. The polypeptide is N,N-dimethyltransferase OxyT (Streptomyces rimosus).